Reading from the N-terminus, the 80-residue chain is Metallothionein-like protein BIF98 (80 aa).

It belongs to the metallothionein superfamily. Type 15 family.

In terms of biological role, metallothioneins have a high content of cysteine residues that bind various heavy metals. The chain is Metallothionein-like protein BIF98 from Brassica rapa subsp. pekinensis (Chinese cabbage).